The sequence spans 189 residues: MLLSELVATASSLPYTAISIHNNCRVPAARHIHHGCRYFHGPPVMHLPQCLRTIQFSPSVISTSYQIPVICQHHAVVPTARYLPDYCSIISWHRPLWGIHILIVPQSQLPLPIRPKRIHTTHRYKPVIAFNDHIPSLALWICLHYQGSNGCVTPVAAKFFIIFHFVGLKEIMSPSRNATRNLNQYWRVL.

This is an uncharacterized protein from Saccharomyces cerevisiae (strain ATCC 204508 / S288c) (Baker's yeast).